A 315-amino-acid chain; its full sequence is Ribosomal protein L11 methyltransferase (315 aa).

4 residues coordinate S-adenosyl-L-methionine: threonine 164, glycine 185, aspartate 207, and asparagine 249.

The protein belongs to the methyltransferase superfamily. PrmA family.

The protein resides in the cytoplasm. It carries out the reaction L-lysyl-[protein] + 3 S-adenosyl-L-methionine = N(6),N(6),N(6)-trimethyl-L-lysyl-[protein] + 3 S-adenosyl-L-homocysteine + 3 H(+). Functionally, methylates ribosomal protein L11. In Lactobacillus gasseri (strain ATCC 33323 / DSM 20243 / BCRC 14619 / CIP 102991 / JCM 1131 / KCTC 3163 / NCIMB 11718 / NCTC 13722 / AM63), this protein is Ribosomal protein L11 methyltransferase.